Here is a 231-residue protein sequence, read N- to C-terminus: U1 small nuclear ribonucleoprotein C (231 aa).

The Matrin-type zinc-finger motif lies at 4–36 (YYCEYCHSYLTHDTLSVRKSHLVGKNHLRITAD). Residues 49–61 (HNHKRRHIGKRGR) are compositionally biased toward basic residues. Disordered regions lie at residues 49 to 71 (HNHK…SQNE), 137 to 177 (PQRA…LEPP), and 205 to 231 (ESKK…RYGN).

Belongs to the U1 small nuclear ribonucleoprotein C family. U1 snRNP is composed of the 7 core Sm proteins SMB1, SMD1, SMD2, SMD3, SME1, SMX3 and SMX2 (Sm proteins B, D1, D2, D3, E, F and G, respectively) that assemble in a heptameric protein ring on the Sm site of the small nuclear RNA to form the core snRNP, and at least 10 U1 snRNP-specific proteins SNP1/U1-70K, MUD1/U1-A, YHC1/U1-C, LUC7, NAM8, PRP39, PRP40, PRP42, SNU56 and SNU71. YHC1/U1-C interacts with U1 snRNA and the 5' splice-site region of the pre-mRNA.

Its subcellular location is the nucleus. Its function is as follows. Component of the spliceosomal U1 snRNP, which is essential for recognition of the pre-mRNA 5' splice-site and the subsequent assembly of the spliceosome. YHC1/U1-C is directly involved in initial 5' splice-site recognition for both constitutive and regulated alternative splicing. The interaction with the 5' splice-site seems to precede base-pairing between the pre-mRNA and the U1 snRNA. Stimulates commitment or early (E) complex formation by stabilizing the base pairing of the 5' end of the U1 snRNA and the 5' splice-site region. In Saccharomyces cerevisiae (strain ATCC 204508 / S288c) (Baker's yeast), this protein is U1 small nuclear ribonucleoprotein C.